The primary structure comprises 194 residues: Fimbrial protein 987P (194 aa).

The first 23 residues, 1-23 (MRMKKSALTLAVLSSLFSGYSLA), serve as a signal peptide directing secretion. Cys-46 and Cys-85 are disulfide-bonded.

The protein belongs to the fimbrial protein family.

It is found in the fimbrium. In Escherichia coli, this protein is Fimbrial protein 987P (fasA).